Reading from the N-terminus, the 131-residue chain is Transcription antitermination protein NusB (131 aa).

This sequence belongs to the NusB family.

Involved in transcription antitermination. Required for transcription of ribosomal RNA (rRNA) genes. Binds specifically to the boxA antiterminator sequence of the ribosomal RNA (rrn) operons. This is Transcription antitermination protein NusB from Ligilactobacillus salivarius (strain UCC118) (Lactobacillus salivarius).